Reading from the N-terminus, the 106-residue chain is Cytochrome c oxidase assembly factor 3 homolog, mitochondrial (106 aa).

The interval methionine 1 to glutamine 34 is disordered. Alanine 2 is subject to N-acetylalanine. Topologically, residues alanine 2 to asparagine 57 are mitochondrial matrix. The helical transmembrane segment at isoleucine 58 to serine 78 threads the bilayer. Residues serine 78–serine 104 are a coiled coil. Over isoleucine 79 to serine 106 the chain is Mitochondrial intermembrane.

This sequence belongs to the COA3 family. Along with COX14, core component of the MITRAC (mitochondrial translation regulation assembly intermediate of cytochrome c oxidase complex) complex. Interacts with MT-CO1/COX1, SMIM20, SURF1 and TIMM21.

Its subcellular location is the mitochondrion inner membrane. Core component of the MITRAC (mitochondrial translation regulation assembly intermediate of cytochrome c oxidase complex) complex, that regulates cytochrome c oxidase assembly. MITRAC complexes regulate both translation of mitochondrial encoded components and assembly of nuclear-encoded components imported in mitochondrion. Required for efficient translation of MT-CO1 and mitochondrial respiratory chain complex IV assembly. This chain is Cytochrome c oxidase assembly factor 3 homolog, mitochondrial (COA3), found in Homo sapiens (Human).